The primary structure comprises 875 residues: Phosphoenolpyruvate carboxylase (875 aa).

Residues H137 and K542 contribute to the active site.

This sequence belongs to the PEPCase type 1 family. Mg(2+) is required as a cofactor.

It carries out the reaction oxaloacetate + phosphate = phosphoenolpyruvate + hydrogencarbonate. In terms of biological role, forms oxaloacetate, a four-carbon dicarboxylic acid source for the tricarboxylic acid cycle. The protein is Phosphoenolpyruvate carboxylase of Pseudomonas putida (strain ATCC 47054 / DSM 6125 / CFBP 8728 / NCIMB 11950 / KT2440).